We begin with the raw amino-acid sequence, 478 residues long: E3 ubiquitin-protein ligase makorin-1 (478 aa).

3 consecutive C3H1-type zinc fingers follow at residues 51–78 (WTKQVTCRYFMHGVCKKGNNCRYSHDLS), 80–107 (SQSAMVCRYYQRGCCAYGDRCRYEHTKP), and 204–231 (EMKKQLCPYAAVGECRYGENCVYLHGDA). The makorin-type Cys-His stretch occupies residues 232-259 (CDMCGLQVLHPVDAAQRSQHIKSCIEAH). Residues 277–331 (CGICMEVVYEKANPSERRFGILSNCNHTYCLKCIRKWRSAKQFESKIIKSCPECR) form an RING-type zinc finger. The segment at 360–389 (AMSNKPCRYFDEGRGSCPFGGNCFYKHAYP) adopts a C3H1-type 4 zinc-finger fold.

As to quaternary structure, interacts with p53/TP53 and CDKN1A. Interacts with TERT, modulating telomere length homeostasis. Post-translationally, auto-ubiquitinated; which leads to proteasomal degradation.

The catalysed reaction is S-ubiquitinyl-[E2 ubiquitin-conjugating enzyme]-L-cysteine + [acceptor protein]-L-lysine = [E2 ubiquitin-conjugating enzyme]-L-cysteine + N(6)-ubiquitinyl-[acceptor protein]-L-lysine.. It functions in the pathway protein modification; protein ubiquitination. In terms of biological role, E3 ubiquitin ligase catalyzing the covalent attachment of ubiquitin moieties onto substrate proteins. These substrates include FILIP1, p53/TP53, CDKN1A and TERT. Keeps cells alive by suppressing p53/TP53 under normal conditions, but stimulates apoptosis by repressing CDKN1A under stress conditions. Acts as a negative regulator of telomerase. Has negative and positive effects on RNA polymerase II-dependent transcription. The protein is E3 ubiquitin-protein ligase makorin-1 (MKRN1) of Notamacropus eugenii (Tammar wallaby).